A 721-amino-acid polypeptide reads, in one-letter code: 1,4-alpha-glucan branching enzyme GlgB (721 aa).

Catalysis depends on D404, which acts as the Nucleophile. The Proton donor role is filled by E457.

It belongs to the glycosyl hydrolase 13 family. GlgB subfamily. As to quaternary structure, monomer.

It carries out the reaction Transfers a segment of a (1-&gt;4)-alpha-D-glucan chain to a primary hydroxy group in a similar glucan chain.. The protein operates within glycan biosynthesis; glycogen biosynthesis. Functionally, catalyzes the formation of the alpha-1,6-glucosidic linkages in glycogen by scission of a 1,4-alpha-linked oligosaccharide from growing alpha-1,4-glucan chains and the subsequent attachment of the oligosaccharide to the alpha-1,6 position. The sequence is that of 1,4-alpha-glucan branching enzyme GlgB from Bradyrhizobium diazoefficiens (strain JCM 10833 / BCRC 13528 / IAM 13628 / NBRC 14792 / USDA 110).